A 94-amino-acid polypeptide reads, in one-letter code: Pyrimidine/purine nucleoside phosphorylase (94 aa).

It belongs to the nucleoside phosphorylase PpnP family.

It carries out the reaction a purine D-ribonucleoside + phosphate = a purine nucleobase + alpha-D-ribose 1-phosphate. It catalyses the reaction adenosine + phosphate = alpha-D-ribose 1-phosphate + adenine. The catalysed reaction is cytidine + phosphate = cytosine + alpha-D-ribose 1-phosphate. The enzyme catalyses guanosine + phosphate = alpha-D-ribose 1-phosphate + guanine. It carries out the reaction inosine + phosphate = alpha-D-ribose 1-phosphate + hypoxanthine. It catalyses the reaction thymidine + phosphate = 2-deoxy-alpha-D-ribose 1-phosphate + thymine. The catalysed reaction is uridine + phosphate = alpha-D-ribose 1-phosphate + uracil. The enzyme catalyses xanthosine + phosphate = alpha-D-ribose 1-phosphate + xanthine. Its function is as follows. Catalyzes the phosphorolysis of diverse nucleosides, yielding D-ribose 1-phosphate and the respective free bases. Can use uridine, adenosine, guanosine, cytidine, thymidine, inosine and xanthosine as substrates. Also catalyzes the reverse reactions. This chain is Pyrimidine/purine nucleoside phosphorylase, found in Citrobacter koseri (strain ATCC BAA-895 / CDC 4225-83 / SGSC4696).